A 555-amino-acid polypeptide reads, in one-letter code: Glutamine--tRNA ligase (555 aa).

The 'HIGH' region motif lies at 34–44; sequence PEPNGFLHIGH. ATP is bound by residues 35-37 and 41-47; these read EPN and HIGHAKS. Residues aspartate 67 and tyrosine 212 each coordinate L-glutamine. ATP contacts are provided by residues threonine 231, 261 to 262, and 269 to 271; these read RL and LSK. Residues 268–272 carry the 'KMSKS' region motif; the sequence is VLSKR.

Belongs to the class-I aminoacyl-tRNA synthetase family. In terms of assembly, monomer.

The protein localises to the cytoplasm. It catalyses the reaction tRNA(Gln) + L-glutamine + ATP = L-glutaminyl-tRNA(Gln) + AMP + diphosphate. This is Glutamine--tRNA ligase from Alteromonas mediterranea (strain DSM 17117 / CIP 110805 / LMG 28347 / Deep ecotype).